We begin with the raw amino-acid sequence, 613 residues long: WD40 repeat-containing protein HOS15 (613 aa).

Residues 5-37 enclose the LisH domain; the sequence is TSVELNFLVFRYLQESGFTHAAFTLGYEAGINK. Disordered stretches follow at residues 101 to 174 and 193 to 214; these read KKRK…REKM and EIEREREREKIEREKSHEKQLG. WD repeat units follow at residues 263–302, 322–362, 363–402, 405–443, 446–485, 488–536, 539–580, and 582–613; these read GHTSEVCACAWSPSASLLASGSGDATARIWSIPEGSFKAV, EKSK…STLS, KHKGPIFSLKWNKKGDYLLTGSVDRTAVVWDVKAEEWKQQ, FHSGPTLDVDWRNNVSFATSSTDSMIYLCKIGETRPAKT, GHQGEVNCVKWDPTGSLLASCSDDSTAKIWNIKQSTFVHD, EHTK…MLCS, GHRE…KTYT, and NGGIFEVCWNKEGNKIAACFADNSVCVLDFRM.

Its subcellular location is the nucleus. Its function is as follows. Acts as a repressor of cold stress-regulated gene expression. Interacts specifically with and promotes deacetylation of histone H4. Plays a role in gene regulation for plant acclimation and tolerance to cold stress. The chain is WD40 repeat-containing protein HOS15 from Arabidopsis thaliana (Mouse-ear cress).